The following is an 800-amino-acid chain: Integrin beta-5 (800 aa).

The N-terminal stretch at Met-1–Gly-24 is a signal peptide. Over Leu-25–Met-722 the chain is Extracellular. The PSI domain occupies Ile-27–Gly-76. Disulfide bonds link Cys-28–Cys-46, Cys-36–Cys-463, Cys-39–Cys-64, Cys-49–Cys-75, Cys-202–Cys-211, Cys-259–Cys-300, Cys-401–Cys-413, Cys-433–Cys-461, Cys-465–Cys-484, Cys-476–Cys-487, Cys-489–Cys-498, Cys-500–Cys-530, Cys-513–Cys-528, Cys-522–Cys-533, Cys-535–Cys-548, Cys-550–Cys-571, Cys-555–Cys-569, Cys-563–Cys-574, and Cys-576–Cys-585. A VWFA domain is found at Tyr-136–Ile-378. The Mg(2+) site is built by Ser-147 and Ser-149. Ca(2+) contacts are provided by Ser-149, Asp-152, Asp-153, and Asp-184. 4 residues coordinate Ca(2+): Asn-242, Asp-244, Pro-246, and Glu-247. Residue Glu-247 participates in Mg(2+) binding. An N-linked (GlcNAc...) asparagine glycan is attached at Asn-347. Gly-362 contributes to the Ca(2+) binding site. 4 I-EGF domains span residues Cys-465 to Glu-499, Cys-500 to Glu-549, Cys-550 to Asn-586, and Cys-587 to Glu-626. Asn-479 carries N-linked (GlcNAc...) asparagine glycosylation. Asn-552 carries N-linked (GlcNAc...) asparagine glycosylation. Asn-586 is a glycosylation site (N-linked (GlcNAc...) asparagine). 9 disulfides stabilise this stretch: Cys-587-Cys-610, Cys-594-Cys-608, Cys-602-Cys-613, Cys-615-Cys-625, Cys-628-Cys-631, Cys-635-Cys-683, Cys-641-Cys-662, Cys-644-Cys-658, and Cys-691-Cys-715. Asn-655 and Asn-706 each carry an N-linked (GlcNAc...) asparagine glycan. The helical transmembrane segment at Thr-723 to Trp-743 threads the bilayer. Residues Lys-744–Asp-800 are Cytoplasmic-facing. Ser-771 bears the Phosphoserine mark.

It belongs to the integrin beta chain family. In terms of assembly, heterodimer of an alpha and a beta subunit. Beta-5 (ITGB5) associates with alpha-V (ITGAV). Interacts with MYO10. Interacts with DAB2. Integrin ITGAV:ITGB5 interacts with FBLN5 (via N-terminus). ITGAV:ITGB5 interacts with CCN3. Interacts with tensin TNS3; TNS3 also interacts with PEAK1, thus acting as an adapter molecule to bridge the association of PEAK1 with ITGB5.

It localises to the cell membrane. Functionally, integrin alpha-V/beta-5 (ITGAV:ITGB5) is a receptor for fibronectin. It recognizes the sequence R-G-D in its ligand. The polypeptide is Integrin beta-5 (ITGB5) (Bos taurus (Bovine)).